The primary structure comprises 161 residues: DNA endonuclease I-CvuI (161 aa).

The protein belongs to the LAGLIDADG endonuclease family.

It localises to the plastid. The protein localises to the chloroplast. Its function is as follows. Probable endonuclease involved in intron homing. The chain is DNA endonuclease I-CvuI from Chlorella vulgaris (Green alga).